Consider the following 216-residue polypeptide: Probable transaldolase (216 aa).

The active-site Schiff-base intermediate with substrate is the K84.

It belongs to the transaldolase family. Type 3B subfamily.

The protein resides in the cytoplasm. The enzyme catalyses D-sedoheptulose 7-phosphate + D-glyceraldehyde 3-phosphate = D-erythrose 4-phosphate + beta-D-fructose 6-phosphate. It functions in the pathway carbohydrate degradation; pentose phosphate pathway; D-glyceraldehyde 3-phosphate and beta-D-fructose 6-phosphate from D-ribose 5-phosphate and D-xylulose 5-phosphate (non-oxidative stage): step 2/3. Its function is as follows. Transaldolase is important for the balance of metabolites in the pentose-phosphate pathway. The protein is Probable transaldolase of Exiguobacterium sp. (strain ATCC BAA-1283 / AT1b).